A 324-amino-acid polypeptide reads, in one-letter code: Beta-ketoacyl-[acyl-carrier-protein] synthase III (324 aa).

Catalysis depends on residues cysteine 112 and histidine 249. An ACP-binding region spans residues 250 to 254 (QANRR). Asparagine 279 is an active-site residue.

The protein belongs to the thiolase-like superfamily. FabH family. Homodimer.

The protein localises to the cytoplasm. It carries out the reaction malonyl-[ACP] + acetyl-CoA + H(+) = 3-oxobutanoyl-[ACP] + CO2 + CoA. It functions in the pathway lipid metabolism; fatty acid biosynthesis. Its function is as follows. Catalyzes the condensation reaction of fatty acid synthesis by the addition to an acyl acceptor of two carbons from malonyl-ACP. Catalyzes the first condensation reaction which initiates fatty acid synthesis and may therefore play a role in governing the total rate of fatty acid production. Possesses both acetoacetyl-ACP synthase and acetyl transacylase activities. Its substrate specificity determines the biosynthesis of branched-chain and/or straight-chain of fatty acids. This Streptococcus equi subsp. equi (strain 4047) protein is Beta-ketoacyl-[acyl-carrier-protein] synthase III.